A 215-amino-acid chain; its full sequence is Programmed cell death protein 10 homolog (215 aa).

It belongs to the PDCD10 family. As to quaternary structure, interacts with gck-1. In terms of tissue distribution, expressed in pharynx, intestine, germline, vulva and excretory canals.

It localises to the cytoplasm. The protein resides in the apical cell membrane. Involved in excretory canal elongation during postembryonic development. Plays a role in promoting Golgi stability, ER integrity and vesicle transport probably by regulating the activation of Rho GTPase cdc-42. Involved in fertility. This is Programmed cell death protein 10 homolog from Caenorhabditis elegans.